Here is a 188-residue protein sequence, read N- to C-terminus: NEDD8-conjugating enzyme UBC12 (188 aa).

Position 1 is an N-acetylmethionine (methionine 1). Residues 1–12 (MLKLRQLQKKKQ) show a composition bias toward basic residues. The segment at 1 to 23 (MLKLRQLQKKKQKENENSSSIQP) is disordered. Residues 27–177 (AARIRLKRDL…VRLTMSGGSI (151 aa)) form the UBC core domain. Cysteine 115 (glycyl thioester intermediate) is an active-site residue.

The protein belongs to the ubiquitin-conjugating enzyme family. UBC12 subfamily. In terms of assembly, interacts with DCN1. In terms of processing, the acetylation of Met-1 is cotranslational, and not regulatory. The N-acetylmethionine increases affinity for DCUN1D1 by about 2 orders of magnitude and is crucial for NEDD8 transfer to cullins.

It catalyses the reaction [E1 NEDD8-activating enzyme]-S-[NEDD8 protein]-yl-L-cysteine + [E2 NEDD8-conjugating enzyme]-L-cysteine = [E1 NEDD8-activating enzyme]-L-cysteine + [E2 NEDD8-conjugating enzyme]-S-[NEDD8-protein]-yl-L-cysteine.. It functions in the pathway protein modification; protein neddylation. In terms of biological role, accepts the ubiquitin-like protein NEDD8/RUB1 from the UBA3-ULA1 E1 complex and catalyzes its covalent attachment to other proteins. The major substrate is CDC53/Cullin. This is NEDD8-conjugating enzyme UBC12 (UBC12) from Saccharomyces cerevisiae (strain ATCC 204508 / S288c) (Baker's yeast).